The chain runs to 127 residues: Fluoride-specific ion channel FluC (127 aa).

4 helical membrane passes run 8–28 (LLIA…QYWF), 37–57 (PWGT…VYAI), 68–88 (WKFL…TFSY), and 100–120 (ILFL…AFAG). Residues G78 and T81 each coordinate Na(+).

The protein belongs to the fluoride channel Fluc/FEX (TC 1.A.43) family.

It is found in the cell inner membrane. It carries out the reaction fluoride(in) = fluoride(out). Its activity is regulated as follows. Na(+) is not transported, but it plays an essential structural role and its presence is essential for fluoride channel function. Functionally, fluoride-specific ion channel. Important for reducing fluoride concentration in the cell, thus reducing its toxicity. The chain is Fluoride-specific ion channel FluC from Leptospira interrogans serogroup Icterohaemorrhagiae serovar copenhageni (strain Fiocruz L1-130).